The primary structure comprises 424 residues: GTPase Obg (424 aa).

One can recognise an Obg domain in the interval 1 to 158 (MFIDTAKILV…RMINLEIKLL (158 aa)). Residues 159–331 (ADVGLIGFPN…LIKEVTRQLS (173 aa)) enclose the OBG-type G domain. Residues 165 to 172 (GFPNVGKS), 190 to 194 (FTTLK), 212 to 215 (DIPG), 282 to 285 (NKID), and 312 to 314 (SAA) each bind GTP. Residues S172 and T192 each coordinate Mg(2+). An OCT domain is found at 345–424 (RFMPEEKRFT…LNDFEFDFLL (80 aa)).

This sequence belongs to the TRAFAC class OBG-HflX-like GTPase superfamily. OBG GTPase family. As to quaternary structure, monomer. Requires Mg(2+) as cofactor.

The protein localises to the cytoplasm. An essential GTPase which binds GTP, GDP and possibly (p)ppGpp with moderate affinity, with high nucleotide exchange rates and a fairly low GTP hydrolysis rate. Plays a role in control of the cell cycle, stress response, ribosome biogenesis and in those bacteria that undergo differentiation, in morphogenesis control. This Clostridium novyi (strain NT) protein is GTPase Obg.